Reading from the N-terminus, the 375-residue chain is Succinyl-diaminopimelate desuccinylase (375 aa).

His66 provides a ligand contact to Zn(2+). Residue Asp68 is part of the active site. Asp99 contributes to the Zn(2+) binding site. Glu133 (proton acceptor) is an active-site residue. 3 residues coordinate Zn(2+): Glu134, Glu162, and His348.

Belongs to the peptidase M20A family. DapE subfamily. Homodimer. Requires Zn(2+) as cofactor. Co(2+) serves as cofactor.

It catalyses the reaction N-succinyl-(2S,6S)-2,6-diaminopimelate + H2O = (2S,6S)-2,6-diaminopimelate + succinate. Its pathway is amino-acid biosynthesis; L-lysine biosynthesis via DAP pathway; LL-2,6-diaminopimelate from (S)-tetrahydrodipicolinate (succinylase route): step 3/3. Functionally, catalyzes the hydrolysis of N-succinyl-L,L-diaminopimelic acid (SDAP), forming succinate and LL-2,6-diaminopimelate (DAP), an intermediate involved in the bacterial biosynthesis of lysine and meso-diaminopimelic acid, an essential component of bacterial cell walls. The polypeptide is Succinyl-diaminopimelate desuccinylase (Escherichia coli O7:K1 (strain IAI39 / ExPEC)).